We begin with the raw amino-acid sequence, 75 residues long: Exodeoxyribonuclease 7 small subunit (75 aa).

This sequence belongs to the XseB family. Heterooligomer composed of large and small subunits.

Its subcellular location is the cytoplasm. The enzyme catalyses Exonucleolytic cleavage in either 5'- to 3'- or 3'- to 5'-direction to yield nucleoside 5'-phosphates.. Bidirectionally degrades single-stranded DNA into large acid-insoluble oligonucleotides, which are then degraded further into small acid-soluble oligonucleotides. The protein is Exodeoxyribonuclease 7 small subunit of Thermoanaerobacter sp. (strain X514).